The primary structure comprises 506 residues: Cysteine--tRNA ligase (506 aa).

C34 serves as a coordination point for Zn(2+). The 'HIGH' region signature appears at 36–46 (PTVYDFAHIGN). Residues C230, H269, and E273 each coordinate Zn(2+). The short motif at 302–306 (KMSKS) is the 'KMSKS' region element. K305 contacts ATP.

Belongs to the class-I aminoacyl-tRNA synthetase family. In terms of assembly, monomer. Zn(2+) serves as cofactor.

Its subcellular location is the cytoplasm. It catalyses the reaction tRNA(Cys) + L-cysteine + ATP = L-cysteinyl-tRNA(Cys) + AMP + diphosphate. The chain is Cysteine--tRNA ligase from Brucella suis (strain ATCC 23445 / NCTC 10510).